Consider the following 181-residue polypeptide: Ribulose bisphosphate carboxylase small subunit 3B, chloroplastic (181 aa).

Residues 1-54 (MASSMLSSAAVVTSPAQATMVAPFTGLKSSAAFPVTRKTNKDITSIASNGGRVS) constitute a chloroplast transit peptide.

The protein belongs to the RuBisCO small chain family. Heterohexadecamer of 8 large and 8 small subunits.

It is found in the plastid. Its subcellular location is the chloroplast. RuBisCO catalyzes two reactions: the carboxylation of D-ribulose 1,5-bisphosphate, the primary event in carbon dioxide fixation, as well as the oxidative fragmentation of the pentose substrate. Both reactions occur simultaneously and in competition at the same active site. Although the small subunit is not catalytic it is essential for maximal activity. The protein is Ribulose bisphosphate carboxylase small subunit 3B, chloroplastic (RBCS-3B) of Arabidopsis thaliana (Mouse-ear cress).